The sequence spans 108 residues: Transcription factor S (108 aa).

Zn(2+)-binding residues include Cys-5, Cys-8, Cys-21, Cys-24, Cys-69, Cys-72, Cys-97, and Cys-100. The segment at 5-24 (CPKCNNLMLPKDGKLKCAVC) adopts a C4-type zinc-finger fold. The segment at 65–105 (TRIECPKCGHNEAYWWLQQTRCADEPETRFYKCKKCGHTWR) adopts a TFIIS-type zinc-finger fold.

This sequence belongs to the archaeal RpoM/eukaryotic RPA12/RPB9/RPC11 RNA polymerase family.

In terms of biological role, induces RNA cleavage activity in the RNA polymerase. In its presence, the cleavage activity of the RNA polymerase truncates the RNA back to position +15 in a stepwise manner by releasing mainly dinucleotides from the 3'-end of the nascent RNA. The truncated RNAs are able to continue elongation. Involved in transcriptional proofreading and fidelity. Misincorporation of nucleotides during elongation of transcription leads to arrested elongation complexes which are rescued by TFS-promoted removal of a dinucleotide from the 3'-end. TFS is able to induce a cleavage resynthesis cycle in stalled elongation complexes (resulting from the next missing nucleotide or a reduced incorporation rate of a wrong nucleotide) preventing misincorporation and enabling proofreading in a post-incorporation manner. Pausing of elongation complexes is the main determinant of TFS-induced RNA cleavage. This is Transcription factor S from Methanocaldococcus jannaschii (strain ATCC 43067 / DSM 2661 / JAL-1 / JCM 10045 / NBRC 100440) (Methanococcus jannaschii).